We begin with the raw amino-acid sequence, 20 residues long: Antimicrobial peptide EP-20 (20 aa).

Positions 1-20 (EGPVGLADPDGPASAPLGAP) are disordered.

The protein resides in the secreted. Its function is as follows. The synthetic peptide inhibits growth of fungus P.capsici and partially that of V.dahliae, F.graminearum and F.omysporum. The sequence is that of Antimicrobial peptide EP-20 from Xenorhabdus budapestensis.